The sequence spans 615 residues: MNAIPLRSAVTTQGRNAAGARALWRATGMTDQDFEKPIIAIANSYTQFVPGHVHLKDVGDIVADAIREAGGVPREFNTIAVDDGIAMGHAGMLYSLPSREVISDAVEYMVNGHAADALVCISNCDKITPGMLNAAMRLNIPVVFVSGGPMEAGKAVAVDGVVQAPTDLITAISASASDKVDAQALLEVESAACPTCGSCSGMFTANSMNCLTEALGLSLPGNGSTLATHAKRRDLFTKAGTTIVELCRRYYGEGDASVLPRNIATREAFENAMALDMAMGGSSNTVLHILAAAQEGEIDFDLHSIDQLSREVPCLSKVSPNSDYHMEDVHRGGGIPAILGELYRAGKLNEGVHSVHSATLKEWLLSWDIRSGAATEEAIELFHAAPGGVRTTAPFSTENRWSSLDTDAEGGVIRDVEHAYTADGGLVVLRGNLAEDGAVIKAAGVDPSIWHFEGKALVVESQEEAVRVILDKKVKPGHVVVVRYEGPAGGPGMQEMLHPTAFLKGAGLGKECALITDGRFSGGTSGLSVGHISPEAAHGGLIGLVRDGDPITIDVHERLLQLNISDEEIERRRAEMEASDKPWTPTTRQRKVTKALRAYAAMATSADRGAVREVK.

A Mg(2+)-binding site is contributed by Asp-83. Cys-124 provides a ligand contact to [2Fe-2S] cluster. Mg(2+) is bound by residues Asp-125 and Lys-126. The residue at position 126 (Lys-126) is an N6-carboxylysine. Cys-199 provides a ligand contact to [2Fe-2S] cluster. Glu-495 serves as a coordination point for Mg(2+). Ser-521 acts as the Proton acceptor in catalysis.

The protein belongs to the IlvD/Edd family. As to quaternary structure, homodimer. Requires [2Fe-2S] cluster as cofactor. The cofactor is Mg(2+).

The enzyme catalyses (2R)-2,3-dihydroxy-3-methylbutanoate = 3-methyl-2-oxobutanoate + H2O. It carries out the reaction (2R,3R)-2,3-dihydroxy-3-methylpentanoate = (S)-3-methyl-2-oxopentanoate + H2O. Its pathway is amino-acid biosynthesis; L-isoleucine biosynthesis; L-isoleucine from 2-oxobutanoate: step 3/4. It participates in amino-acid biosynthesis; L-valine biosynthesis; L-valine from pyruvate: step 3/4. Its function is as follows. Functions in the biosynthesis of branched-chain amino acids. Catalyzes the dehydration of (2R,3R)-2,3-dihydroxy-3-methylpentanoate (2,3-dihydroxy-3-methylvalerate) into 2-oxo-3-methylpentanoate (2-oxo-3-methylvalerate) and of (2R)-2,3-dihydroxy-3-methylbutanoate (2,3-dihydroxyisovalerate) into 2-oxo-3-methylbutanoate (2-oxoisovalerate), the penultimate precursor to L-isoleucine and L-valine, respectively. The protein is Dihydroxy-acid dehydratase of Corynebacterium jeikeium (strain K411).